The primary structure comprises 136 residues: ATP synthase epsilon chain, chloroplastic (136 aa).

This sequence belongs to the ATPase epsilon chain family. In terms of assembly, F-type ATPases have 2 components, CF(1) - the catalytic core - and CF(0) - the membrane proton channel. CF(1) has five subunits: alpha(3), beta(3), gamma(1), delta(1), epsilon(1). CF(0) has three main subunits: a, b and c.

The protein resides in the plastid. The protein localises to the chloroplast thylakoid membrane. Produces ATP from ADP in the presence of a proton gradient across the membrane. The sequence is that of ATP synthase epsilon chain, chloroplastic from Tetradesmus obliquus (Green alga).